Consider the following 95-residue polypeptide: Alpha-conotoxin-like Cp20.5 (95 aa).

Positions 1 to 24 (MPKLAVVLLVLLILPLSYFDAAGG) are cleaved as a signal peptide. The propeptide occupies 25 to 45 (QAVQGDRRGNGLARYLQRNGR). Glu-50 is modified (4-carboxyglutamate). Pro-56 bears the 4-hydroxyproline mark. 4 cysteine pairs are disulfide-bonded: Cys-64–Cys-73, Cys-69–Cys-81, Cys-74–Cys-91, and Cys-79–Cys-93.

It belongs to the conotoxin D superfamily. As to quaternary structure, hetero-, homo- or pseudo-homodimer (identical sequence, different post-translational modifications). As to expression, expressed by the venom duct.

The protein localises to the secreted. Alpha-conotoxins act on postsynaptic membranes, they bind to the nicotinic acetylcholine receptors (nAChR) and thus inhibit them. Through its two C-terminal domains, this homodimeric protein would bind to two nAChR allosteric sites, located outside the nAChR C-loop of the principal binding face and at the adjacent binding interface in a clockwise direction. This toxin specifically blocks mammalian neuronal nAChR of the alpha-7/CHRNA7, alpha-3-beta-2/CHRNA3-CHRNB2 and alpha-4-beta-2/CHRNA4-CHRNB2 subtypes. This Conus capitaneus (Captain cone) protein is Alpha-conotoxin-like Cp20.5.